Here is a 454-residue protein sequence, read N- to C-terminus: uncharacterized protein (454 aa).

The [4Fe-4S] cluster site is built by C73, C79, C82, and C154. Positions 279, 307, 328, and 381 each coordinate S-adenosyl-L-methionine. C408 (nucleophile) is an active-site residue.

It belongs to the class I-like SAM-binding methyltransferase superfamily. RNA M5U methyltransferase family.

This is an uncharacterized protein from Leptospira interrogans serogroup Icterohaemorrhagiae serovar copenhageni (strain Fiocruz L1-130).